We begin with the raw amino-acid sequence, 107 residues long: MKDLNSLMKQAQAMQQKLADAQGRIAEMEVEGTSGGGMVKLVLKGTGELARVDLDESLMAPGEGEVVADLIVAAHADAKRKLDEKQAEVMREAAGPFAGMPGMPKLF.

The protein belongs to the YbaB/EbfC family. In terms of assembly, homodimer.

It is found in the cytoplasm. The protein resides in the nucleoid. In terms of biological role, binds to DNA and alters its conformation. May be involved in regulation of gene expression, nucleoid organization and DNA protection. The sequence is that of Nucleoid-associated protein PHZ_c0369 from Phenylobacterium zucineum (strain HLK1).